The sequence spans 156 residues: Small ribosomal subunit protein uS7 (156 aa).

The protein belongs to the universal ribosomal protein uS7 family. Part of the 30S ribosomal subunit. Contacts proteins S9 and S11.

One of the primary rRNA binding proteins, it binds directly to 16S rRNA where it nucleates assembly of the head domain of the 30S subunit. Is located at the subunit interface close to the decoding center, probably blocks exit of the E-site tRNA. The chain is Small ribosomal subunit protein uS7 from Arthrobacter sp. (strain FB24).